The primary structure comprises 549 residues: Cytoplasmic trehalase (549 aa).

Substrate contacts are provided by residues Arg168, 175–176 (WD), Asn212, 221–223 (RSQ), 292–294 (RDE), and Gly324. Residues Asp326 and Glu509 each act as proton donor/acceptor in the active site. Glu525 lines the substrate pocket.

It belongs to the glycosyl hydrolase 37 family. Monomer.

It is found in the cytoplasm. It catalyses the reaction alpha,alpha-trehalose + H2O = alpha-D-glucose + beta-D-glucose. Its pathway is glycan degradation; trehalose degradation; D-glucose from alpha,alpha-trehalose: step 1/1. Its function is as follows. Hydrolyzes trehalose to glucose. Could be involved, in cells returning to low osmolarity conditions, in the utilization of the accumulated cytoplasmic trehalose, which was synthesized in response to high osmolarity. The sequence is that of Cytoplasmic trehalase from Salmonella arizonae (strain ATCC BAA-731 / CDC346-86 / RSK2980).